Consider the following 525-residue polypeptide: CTP synthase (525 aa).

An amidoligase domain region spans residues 1–269; the sequence is MKYIIVTGGV…ADAITTHLHL (269 aa). S12 contributes to the CTP binding site. S12 provides a ligand contact to UTP. ATP is bound by residues 13-18 and D70; that span reads GLGKGI. 2 residues coordinate Mg(2+): D70 and E144. CTP-binding positions include 151-153, 190-195, and K226; these read DIE and KTKPTQ. UTP is bound by residues 190-195 and K226; that span reads KTKPTQ. The Glutamine amidotransferase type-1 domain maps to 292–524; that stretch reads VAIVSKYGIE…VSACRKNKKT (233 aa). Residue G348 participates in L-glutamine binding. C375 acts as the Nucleophile; for glutamine hydrolysis in catalysis. L-glutamine is bound by residues 376–379, E399, and R454; that span reads LGFQ. Residues H497 and E499 contribute to the active site.

It belongs to the CTP synthase family. As to quaternary structure, homotetramer.

It catalyses the reaction UTP + L-glutamine + ATP + H2O = CTP + L-glutamate + ADP + phosphate + 2 H(+). It carries out the reaction L-glutamine + H2O = L-glutamate + NH4(+). The enzyme catalyses UTP + NH4(+) + ATP = CTP + ADP + phosphate + 2 H(+). It participates in pyrimidine metabolism; CTP biosynthesis via de novo pathway; CTP from UDP: step 2/2. Its activity is regulated as follows. Allosterically activated by GTP, when glutamine is the substrate; GTP has no effect on the reaction when ammonia is the substrate. The allosteric effector GTP functions by stabilizing the protein conformation that binds the tetrahedral intermediate(s) formed during glutamine hydrolysis. Inhibited by the product CTP, via allosteric rather than competitive inhibition. Functionally, catalyzes the ATP-dependent amination of UTP to CTP with either L-glutamine or ammonia as the source of nitrogen. Regulates intracellular CTP levels through interactions with the four ribonucleotide triphosphates. The chain is CTP synthase from Methanosphaerula palustris (strain ATCC BAA-1556 / DSM 19958 / E1-9c).